The following is a 962-amino-acid chain: Protocadherin gamma-A4 (962 aa).

The disordered stretch occupies residues methionine 1–arginine 24. The signal sequence occupies residues methionine 1 to alanine 59. Cadherin domains lie at glutamate 60–phenylalanine 164, glycine 165–phenylalanine 273, threonine 274–valine 378, threonine 379–phenylalanine 483, proline 484–phenylalanine 598, and aspartate 601–alanine 713. Over glutamate 60–tyrosine 723 the chain is Extracellular. N-linked (GlcNAc...) asparagine glycosylation is found at asparagine 450 and asparagine 576. A helical membrane pass occupies residues leucine 724–alanine 744. Residues leucine 745–lysine 962 are Cytoplasmic-facing. Disordered stretches follow at residues lysine 832–asparagine 871 and alanine 932–lysine 962. Positions asparagine 836–asparagine 871 are enriched in polar residues. The span at asparagine 952–lysine 962 shows a compositional bias: basic residues.

It is found in the cell membrane. Potential calcium-dependent cell-adhesion protein. May be involved in the establishment and maintenance of specific neuronal connections in the brain. In Homo sapiens (Human), this protein is Protocadherin gamma-A4 (PCDHGA4).